We begin with the raw amino-acid sequence, 315 residues long: Small ribosomal subunit protein uS3 (315 aa).

In terms of domain architecture, KH type-2 spans 38–106 (IRKMMSRGME…QVQLNILEVK (69 aa)). The interval 211-315 (AEREAQEALQ…VANTPEKAEE (105 aa)) is disordered. A compositionally biased stretch (basic residues) spans 222–232 (QTRRERPRRGP). The segment covering 265-315 (APAETPAGEAAATEPTAPVAEPATAAASAPAEAASAPAEAAVANTPEKAEE) has biased composition (low complexity).

It belongs to the universal ribosomal protein uS3 family. As to quaternary structure, part of the 30S ribosomal subunit. Forms a tight complex with proteins S10 and S14.

Its function is as follows. Binds the lower part of the 30S subunit head. Binds mRNA in the 70S ribosome, positioning it for translation. This Frankia casuarinae (strain DSM 45818 / CECT 9043 / HFP020203 / CcI3) protein is Small ribosomal subunit protein uS3.